A 374-amino-acid chain; its full sequence is 4-hydroxy-3-methylbut-2-en-1-yl diphosphate synthase (flavodoxin) (374 aa).

Residues Cys270, Cys273, Cys305, and Glu312 each coordinate [4Fe-4S] cluster.

Belongs to the IspG family. [4Fe-4S] cluster serves as cofactor.

It catalyses the reaction (2E)-4-hydroxy-3-methylbut-2-enyl diphosphate + oxidized [flavodoxin] + H2O + 2 H(+) = 2-C-methyl-D-erythritol 2,4-cyclic diphosphate + reduced [flavodoxin]. It functions in the pathway isoprenoid biosynthesis; isopentenyl diphosphate biosynthesis via DXP pathway; isopentenyl diphosphate from 1-deoxy-D-xylulose 5-phosphate: step 5/6. Converts 2C-methyl-D-erythritol 2,4-cyclodiphosphate (ME-2,4cPP) into 1-hydroxy-2-methyl-2-(E)-butenyl 4-diphosphate. This is 4-hydroxy-3-methylbut-2-en-1-yl diphosphate synthase (flavodoxin) from Vibrio cholerae serotype O1 (strain ATCC 39315 / El Tor Inaba N16961).